Consider the following 518-residue polypeptide: 2,3-bisphosphoglycerate-independent phosphoglycerate mutase (518 aa).

Residues aspartate 14 and serine 64 each contribute to the Mn(2+) site. Serine 64 acts as the Phosphoserine intermediate in catalysis. Substrate contacts are provided by residues histidine 125, 155–156 (RD), arginine 187, arginine 193, 264–267 (RPDR), and lysine 337. Mn(2+)-binding residues include aspartate 404, histidine 408, aspartate 445, histidine 446, and histidine 467.

The protein belongs to the BPG-independent phosphoglycerate mutase family. Requires Mn(2+) as cofactor.

The catalysed reaction is (2R)-2-phosphoglycerate = (2R)-3-phosphoglycerate. It functions in the pathway carbohydrate degradation; glycolysis; pyruvate from D-glyceraldehyde 3-phosphate: step 3/5. In terms of biological role, catalyzes the interconversion of 2-phosphoglycerate and 3-phosphoglycerate. The chain is 2,3-bisphosphoglycerate-independent phosphoglycerate mutase from Methanococcoides burtonii (strain DSM 6242 / NBRC 107633 / OCM 468 / ACE-M).